Here is a 731-residue protein sequence, read N- to C-terminus: Replication restart protein PriA (731 aa).

Residues 1-98 (MSVAHVALPV…HPIGDVLFHA (98 aa)) form a 3'BD region. A WH region spans residues 115–177 (WYWFATEQGQ…RGKGLAELAC (63 aa)). Positions 200–375 (TEQATAVGAI…VRQGKYRQLT (176 aa)) are helicase lobe 1. In terms of domain architecture, Helicase ATP-binding spans 210–376 (HSAADRFSAW…RQGKYRQLTL (167 aa)). 223 to 230 (GITGSGKT) contacts ATP. 6 residues coordinate ADP: glycine 226, glycine 228, lysine 229, threonine 230, glutamate 231, and arginine 263. The DEAH box signature appears at 319–322 (DEEH). The Aromatic-rich loop (ARL) signature appears at 326 to 340 (YKQQEGWRYHARDLA). The helicase lobe 2, N-terminus stretch occupies residues 387 to 430 (QQHVLDLKGQPLQAGLSPALISRMRQHLQADNQVILFLNRRGFA). A CRR region spans residues 431–485 (PALLCHDCGWIAECPRCDSYYTLHQAQHHLRCHHCDSQRPIPRQCPSCGSTHLVP). Zn(2+)-binding residues include cysteine 435, cysteine 438, cysteine 444, cysteine 447, cysteine 462, cysteine 465, cysteine 475, and cysteine 478. A Helicase C-terminal domain is found at 470–637 (PIPRQCPSCG…QLPPWTSHVL (168 aa)). The segment at 486–626 (VGIGTEQLEQ…AEQALAERQT (141 aa)) is helicase lobe 2, C-terminus. Lysine 543 is an ADP binding site. Residues 633-731 (TSHVLIRAED…WVLDVDPIEG (99 aa)) are CTD.

This sequence belongs to the helicase family. PriA subfamily. As to quaternary structure, binds SSB. Component of the replication restart primosome. It depends on Zn(2+) as a cofactor.

The enzyme catalyses Couples ATP hydrolysis with the unwinding of duplex DNA by translocating in the 3'-5' direction.. It catalyses the reaction ATP + H2O = ADP + phosphate + H(+). ATPase activity is stimulated by single-stranded binding protein (SSB). Initiates the restart of stalled replication forks, which reloads the replicative helicase on sites other than the origin of replication. Recognizes and binds to abandoned replication forks and remodels them to uncover a helicase loading site. Promotes assembly of the primosome at these replication forks. Its function is as follows. Recognizes abandoned replication forks and remodels SSB on ssDNA to uncover a loading site for DnaB. Binds replication fork DNA, has DNA-dependent ATPase activity in the presence of replication fork DNA, restores normal cell growth and SOS induction to E.coli mutant pirA304. The protein is Replication restart protein PriA of Klebsiella pneumoniae subsp. pneumoniae (strain ATCC 700721 / MGH 78578).